The sequence spans 271 residues: (21S)-21-acetoxyl-apo-melianone synthase SDR (271 aa).

Ser-150 functions as the Proton donor in the catalytic mechanism. The Proton acceptor role is filled by Tyr-163. The active-site Proton donor/acceptor is Lys-167.

This sequence belongs to the short-chain dehydrogenases/reductases (SDR) family. In terms of tissue distribution, mainly expressed in petioles.

The enzyme catalyses 21-O-acetyl-isomeliandiol + A = (21S)-21-acetoxyl-apo-melianone + AH2. The protein operates within secondary metabolite biosynthesis; terpenoid biosynthesis. Its function is as follows. Oxidoreductase involved in the biosynthesis of limonoids triterpene natural products such as azadirachtin, an antifeedant widely used as bioinsecticide, and possessing many medicinal applications including anti-tumoral, anti-malarial, anti-rheumatic, antibacterial, anti-inflammatory, anti-pyretic and diuretic effects. Catalyzes the oxidation of 21-O-acetyl-isomeliandiol to (21S)-21-acetoxyl-apo-melianone. The polypeptide is (21S)-21-acetoxyl-apo-melianone synthase SDR (Melia azedarach (Chinaberry tree)).